Reading from the N-terminus, the 138-residue chain is Large ribosomal subunit protein uL16 (138 aa).

The segment covering 1–13 (MLQPSRRKFRKEQ) has biased composition (basic residues). The disordered stretch occupies residues 1–20 (MLQPSRRKFRKEQKGRNTGV).

This sequence belongs to the universal ribosomal protein uL16 family. In terms of assembly, part of the 50S ribosomal subunit.

Its function is as follows. Binds 23S rRNA and is also seen to make contacts with the A and possibly P site tRNAs. This chain is Large ribosomal subunit protein uL16, found in Leptothrix cholodnii (strain ATCC 51168 / LMG 8142 / SP-6) (Leptothrix discophora (strain SP-6)).